A 542-amino-acid polypeptide reads, in one-letter code: CTP synthase (542 aa).

The tract at residues 1 to 265 is amidoligase domain; it reads MARYVFITGG…DSEVLSAFGI (265 aa). Position 13 (S13) interacts with CTP. S13 lines the UTP pocket. 14–19 lines the ATP pocket; that stretch reads SLGKGI. Y54 is a binding site for L-glutamine. Residue D71 coordinates ATP. Residues D71 and E139 each contribute to the Mg(2+) site. CTP-binding positions include 146–148, 186–191, and K222; these read DIE and KTKPTQ. Residues 186-191 and K222 each bind UTP; that span reads KTKPTQ. In terms of domain architecture, Glutamine amidotransferase type-1 spans 291–541; that stretch reads TIAVVGKYTG…IEAAIEQSRL (251 aa). An L-glutamine-binding site is contributed by G353. The Nucleophile; for glutamine hydrolysis role is filled by C380. L-glutamine-binding positions include 381-384, E404, and R469; that span reads FGMQ. Active-site residues include H514 and E516.

Belongs to the CTP synthase family. As to quaternary structure, homotetramer.

The catalysed reaction is UTP + L-glutamine + ATP + H2O = CTP + L-glutamate + ADP + phosphate + 2 H(+). It carries out the reaction L-glutamine + H2O = L-glutamate + NH4(+). The enzyme catalyses UTP + NH4(+) + ATP = CTP + ADP + phosphate + 2 H(+). The protein operates within pyrimidine metabolism; CTP biosynthesis via de novo pathway; CTP from UDP: step 2/2. Allosterically activated by GTP, when glutamine is the substrate; GTP has no effect on the reaction when ammonia is the substrate. The allosteric effector GTP functions by stabilizing the protein conformation that binds the tetrahedral intermediate(s) formed during glutamine hydrolysis. Inhibited by the product CTP, via allosteric rather than competitive inhibition. Functionally, catalyzes the ATP-dependent amination of UTP to CTP with either L-glutamine or ammonia as the source of nitrogen. Regulates intracellular CTP levels through interactions with the four ribonucleotide triphosphates. This Brucella melitensis biotype 2 (strain ATCC 23457) protein is CTP synthase.